Consider the following 2252-residue polypeptide: RNA1 polyprotein (2252 aa).

Over 565 to 1140 (MITTLAQSIF…QGREFIVSNG (576 aa)) the chain is Cytoplasmic. The 167-residue stretch at 733 to 899 (MKDLLELQKR…PGVIFDPDNA (167 aa)) folds into the SF3 helicase domain. 763–770 (GPSHCGKS) serves as a coordination point for ATP. Residues 1141 to 1161 (GGILMIAAAIILVLVCGWGFW) form a helical membrane-spanning segment. Residues 1162–1187 (KAFVGLFTGSMSLGAALAGCQEAEVK) lie on the Lumenal side of the membrane. The 210-residue stretch at 1213–1422 (SYARSQAGNG…WACILPNPHL (210 aa)) folds into the Peptidase C3 domain. Residues H1256, E1294, and C1386 each act as for picornain 3C-like protease activity in the active site. In terms of domain architecture, RdRp catalytic spans 1697–1825 (NEAINCDYSG…SVSPAVASWF (129 aa)).

Belongs to the nepoviruses RNA1 polyprotein family. Post-translationally, specific enzymatic cleavages by picornain 3C-like protease in vivo yield mature proteins. Picornain 3C-like protease is autocatalytically processed. In terms of processing, VPg is uridylylated by the polymerase and is covalently linked to the 5'-end of genomic RNA. This uridylylated form acts as a nucleotide-peptide primer for the polymerase.

The protein resides in the host endoplasmic reticulum lumen. It localises to the host endoplasmic reticulum membrane. The catalysed reaction is RNA(n) + a ribonucleoside 5'-triphosphate = RNA(n+1) + diphosphate. Its function is as follows. Picornain 3C-like protease is a thiol protease that cleaves the P1 and P2 polyproteins. This Apium graveolens (Celery) protein is RNA1 polyprotein.